The chain runs to 258 residues: uncharacterized protein (258 aa).

The HTH deoR-type domain occupies 3–58 (VAERQQKIVEIVNMRSSIRVSELSDIFSVTEETIRRDLEKLEKEHKLSRSHGGAVS). The segment at residues 20–39 (IRVSELSDIFSVTEETIRRD) is a DNA-binding region (H-T-H motif).

This is an uncharacterized protein from Bacillus subtilis (strain 168).